Reading from the N-terminus, the 196-residue chain is Pyridoxal 5'-phosphate synthase subunit PdxT (196 aa).

L-glutamine is bound at residue 47-49 (GES). C79 (nucleophile) is an active-site residue. Residues R106 and 134 to 135 (IR) each bind L-glutamine. Residues H170 and E172 each act as charge relay system in the active site.

It belongs to the glutaminase PdxT/SNO family. In the presence of PdxS, forms a dodecamer of heterodimers. Only shows activity in the heterodimer.

It catalyses the reaction aldehydo-D-ribose 5-phosphate + D-glyceraldehyde 3-phosphate + L-glutamine = pyridoxal 5'-phosphate + L-glutamate + phosphate + 3 H2O + H(+). The catalysed reaction is L-glutamine + H2O = L-glutamate + NH4(+). It functions in the pathway cofactor biosynthesis; pyridoxal 5'-phosphate biosynthesis. Functionally, catalyzes the hydrolysis of glutamine to glutamate and ammonia as part of the biosynthesis of pyridoxal 5'-phosphate. The resulting ammonia molecule is channeled to the active site of PdxS. The sequence is that of Pyridoxal 5'-phosphate synthase subunit PdxT from Bacillus cereus (strain B4264).